A 116-amino-acid polypeptide reads, in one-letter code: NADH-ubiquinone oxidoreductase chain 3 (116 aa).

The next 3 helical transmembrane spans lie at 3–23 (LLMT…IVSF), 56–76 (FFLI…LLPL), and 85–105 (PLLT…GLIY).

The protein belongs to the complex I subunit 3 family.

It is found in the mitochondrion membrane. It catalyses the reaction a ubiquinone + NADH + 5 H(+)(in) = a ubiquinol + NAD(+) + 4 H(+)(out). Its function is as follows. Core subunit of the mitochondrial membrane respiratory chain NADH dehydrogenase (Complex I) that is believed to belong to the minimal assembly required for catalysis. Complex I functions in the transfer of electrons from NADH to the respiratory chain. The immediate electron acceptor for the enzyme is believed to be ubiquinone. The protein is NADH-ubiquinone oxidoreductase chain 3 (MT-ND3) of Paralichthys olivaceus (Bastard halibut).